A 267-amino-acid polypeptide reads, in one-letter code: DNA repair protein RecO (267 aa).

This sequence belongs to the RecO family.

Functionally, involved in DNA repair and RecF pathway recombination. The protein is DNA repair protein RecO of Prochlorococcus marinus (strain MIT 9303).